We begin with the raw amino-acid sequence, 284 residues long: Plastid-lipid-associated protein 6, chloroplastic (284 aa).

The span at 1 to 11 shows a compositional bias: low complexity; the sequence is MATSSTFSSLL. Positions 1–47 are disordered; that stretch reads MATSSTFSSLLPSPPALLSDHRSPPPSIRYSFSPLTTPKSSRLGFTV. The transit peptide at 1–72 directs the protein to the chloroplast; it reads MATSSTFSSL…SIGGESDPPP (72 aa). Phosphoserine occurs at positions 96, 105, 148, 151, and 155.

The protein belongs to the PAP/fibrillin family. As to quaternary structure, part of the Photosystem II light-harvesting complex (LHCII). Post-translationally, phosphorylated as part of a basal defense response.

Its subcellular location is the plastid. It localises to the chloroplast. The protein resides in the plastoglobule. In terms of biological role, required for plastoglobule development and resistance to multiple stresses. Regulates plastoglobule osmiophilic content. May be involved in the transport of lipophilic antioxidants in and out of the plastoglobule. In Arabidopsis thaliana (Mouse-ear cress), this protein is Plastid-lipid-associated protein 6, chloroplastic.